Reading from the N-terminus, the 242-residue chain is 1-(5-phosphoribosyl)-5-[(5-phosphoribosylamino)methylideneamino] imidazole-4-carboxamide isomerase (242 aa).

D7 serves as the catalytic Proton acceptor. Residue D129 is the Proton donor of the active site.

It belongs to the HisA/HisF family.

It is found in the cytoplasm. It carries out the reaction 1-(5-phospho-beta-D-ribosyl)-5-[(5-phospho-beta-D-ribosylamino)methylideneamino]imidazole-4-carboxamide = 5-[(5-phospho-1-deoxy-D-ribulos-1-ylimino)methylamino]-1-(5-phospho-beta-D-ribosyl)imidazole-4-carboxamide. The protein operates within amino-acid biosynthesis; L-histidine biosynthesis; L-histidine from 5-phospho-alpha-D-ribose 1-diphosphate: step 4/9. The sequence is that of 1-(5-phosphoribosyl)-5-[(5-phosphoribosylamino)methylideneamino] imidazole-4-carboxamide isomerase from Pseudoalteromonas translucida (strain TAC 125).